Here is a 350-residue protein sequence, read N- to C-terminus: uncharacterized protein (350 aa).

Helical transmembrane passes span 10 to 30 (YSFI…EVIG), 51 to 71 (FAGI…VTLT), and 327 to 347 (ILSL…LKLF).

Belongs to the 1-acyl-sn-glycerol-3-phosphate acyltransferase family.

It is found in the endoplasmic reticulum membrane. This is an uncharacterized protein from Schizosaccharomyces pombe (strain 972 / ATCC 24843) (Fission yeast).